The following is a 105-amino-acid chain: Malonate decarboxylase acyl carrier protein (105 aa).

At serine 28 the chain carries O-(phosphoribosyl dephospho-coenzyme A)serine.

It belongs to the MdcC family. Post-translationally, covalently binds the prosthetic group of malonate decarboxylase.

It localises to the cytoplasm. Functionally, subunit of malonate decarboxylase, it is an acyl carrier protein to which acetyl and malonyl thioester residues are bound via a 2'-(5''-phosphoribosyl)-3'-dephospho-CoA prosthetic group and turn over during the catalytic mechanism. The sequence is that of Malonate decarboxylase acyl carrier protein from Xanthomonas euvesicatoria pv. vesicatoria (strain 85-10) (Xanthomonas campestris pv. vesicatoria).